A 169-amino-acid polypeptide reads, in one-letter code: S-ribosylhomocysteine lyase (169 aa).

Positions 54, 58, and 128 each coordinate Fe cation.

This sequence belongs to the LuxS family. Homodimer. Requires Fe cation as cofactor.

The enzyme catalyses S-(5-deoxy-D-ribos-5-yl)-L-homocysteine = (S)-4,5-dihydroxypentane-2,3-dione + L-homocysteine. Its function is as follows. Involved in the synthesis of autoinducer 2 (AI-2) which is secreted by bacteria and is used to communicate both the cell density and the metabolic potential of the environment. The regulation of gene expression in response to changes in cell density is called quorum sensing. Catalyzes the transformation of S-ribosylhomocysteine (RHC) to homocysteine (HC) and 4,5-dihydroxy-2,3-pentadione (DPD). In Shewanella oneidensis (strain ATCC 700550 / JCM 31522 / CIP 106686 / LMG 19005 / NCIMB 14063 / MR-1), this protein is S-ribosylhomocysteine lyase.